A 604-amino-acid polypeptide reads, in one-letter code: Complement factor I (604 aa).

The first 18 residues, 1–18 (MKLALLILLLLNPHLSSS), serve as a signal peptide directing secretion. Intrachain disulfides connect Cys36–Cys260, Cys46–Cys57, Cys51–Cys62, Cys64–Cys96, Cys70–Cys89, Cys78–Cys109, Cys144–Cys186, Cys157–Cys219, Cys191–Cys201, Cys234–Cys252, Cys246–Cys261, Cys264–Cys276, Cys271–Cys289, Cys283–Cys298, Cys349–Cys474, Cys387–Cys403, Cys395–Cys465, Cys488–Cys552, Cys516–Cys531, and Cys542–Cys571. Asn40 carries an N-linked (GlcNAc...) asparagine glycan. A Kazal-like domain is found at 58–111 (IEGTCACKLPYQCPKAGTPVCATNGRGYPTYCHLKSFECLHPEIKFSNNGTCTA). Asn106, Asn116, and Asn182 each carry an N-linked (GlcNAc...) asparagine glycan. An SRCR domain is found at 117–217 (VSLIYGSTDT…SKAPHGLAGV (101 aa)). LDL-receptor class A domains are found at residues 218–262 (VCYT…LCCK) and 263–299 (GCRGQAFLCKSGVCIPNQRKCNGEVDCITGEDESGCE). Positions 244, 247, 249, 251, 257, and 258 each coordinate Ca(2+). Ca(2+) is bound by residues Asn284, Glu286, Asp288, Asp294, and Glu295. The region spanning 362–595 (VVGGKPAEMG…YFDWISYYVG (234 aa)) is the Peptidase S1 domain. Active-site charge relay system residues include His402 and Asp450. N-linked (GlcNAc...) asparagine glycosylation occurs at Asn515. Ser546 (charge relay system) is an active-site residue. The N-linked (GlcNAc...) asparagine glycan is linked to Asn557.

The protein belongs to the peptidase S1 family. In terms of assembly, heterodimer of a light and heavy chains; disulfide-linked. The fully processed and mature protein circulates as a zymogen, and is allosterically activated by substrate-induced remodeling of the active site. Interacts with C3b. Interacts with complement factor H. Expressed in the liver by hepatocytes. Also present in other cells such as monocytes, fibroblasts or keratinocytes.

It is found in the secreted. It localises to the extracellular space. The catalysed reaction is Inactivates complement subcomponents C3b, iC3b and C4b by proteolytic cleavage.. Trypsin-like serine protease that plays an essential role in regulating the immune response by controlling all complement pathways. Inhibits these pathways by cleaving three peptide bonds in the alpha-chain of C3b and two bonds in the alpha-chain of C4b thereby inactivating these proteins. Essential cofactors for these reactions include factor H and C4BP in the fluid phase and membrane cofactor protein/CD46 and CR1 on cell surfaces. The presence of these cofactors on healthy cells allows degradation of deposited C3b by CFI in order to prevent undesired complement activation, while in apoptotic cells or microbes, the absence of such cofactors leads to C3b-mediated complement activation and subsequent opsonization. The polypeptide is Complement factor I (Cfi) (Rattus norvegicus (Rat)).